The sequence spans 78 residues: Large ribosomal subunit protein uL29 (78 aa).

The protein belongs to the universal ribosomal protein uL29 family.

In Rhodococcus erythropolis (strain PR4 / NBRC 100887), this protein is Large ribosomal subunit protein uL29.